Reading from the N-terminus, the 487-residue chain is ATP-dependent RNA helicase DBP3 (487 aa).

A disordered region spans residues 1–40; the sequence is MAKRSRNMESNSERSSRPKKKSKGDAKPEQPPYVQSAELD. A Q motif motif is present at residues 71–98; the sequence is TAFSYLPSDSNQLYGPLEHFSKPTPIQS. In terms of domain architecture, Helicase ATP-binding spans 101-276; that stretch reads WPYLFAGRDV…TTFMKEPVTV (176 aa). ATP is bound at residue 114–121; that stretch reads AETGSGKT. The DEAD box motif lies at 222–225; the sequence is DEAD. Residues 291–456 enclose the Helicase C-terminal domain; the sequence is RIKQIVEVVK…DIPEALLKFG (166 aa).

Belongs to the DEAD box helicase family. DDX5/DBP2 subfamily.

The protein resides in the nucleus. It localises to the nucleolus. It carries out the reaction ATP + H2O = ADP + phosphate + H(+). Its function is as follows. ATP-dependent RNA helicase required for 60S ribosomal subunit synthesis. Involved in efficient pre-rRNA processing, predominantly at site A3, which is necessary for the normal formation of 25S and 5.8S rRNAs. In Ajellomyces capsulatus (strain NAm1 / WU24) (Darling's disease fungus), this protein is ATP-dependent RNA helicase DBP3 (DBP3).